A 1911-amino-acid polypeptide reads, in one-letter code: Adenylate kinase 9 (1911 aa).

The interval 31–285 is adenylate kinase 1; it reads VCFVVFGKPG…LFMIVMDRLK (255 aa). Residue 40–45 coordinates ATP; the sequence is GVGKTT. Positions 60 to 89 are NMP 1; the sequence is EALPILEEQIAAETESGVMLQSMLISGQSI. Residues 87–89 and 116–119 contribute to the AMP site; these read QSI and EIPS. Positions 160 to 205 are LID 1; that stretch reads GQRQHNNTGYIYSRDQWDPEVIENHRKKKKEAQKDGKGEEEEEEEE. Residues 185–210 are disordered; the sequence is RKKKKEAQKDGKGEEEEEEEEQEEEE. A compositionally biased stretch (acidic residues) spans 197 to 210; that stretch reads GEEEEEEEEQEEEE. R229 contacts AMP. Coiled coils occupy residues 443-485 and 676-711; these read AEAT…EFGV and LQKKSEIDSKILERLLEELQKKKKEEEEARKATEEE. Disordered regions lie at residues 728–796 and 892–926; these read KAKE…TEIP and DYEEETEDYQTEAEVDEELEEEEEEEGEDKMKERK. The span at 733 to 750 shows a compositional bias: acidic residues; it reads EETDNEDEEEIEGDELEV. Residues 751–761 are compositionally biased toward basic and acidic residues; the sequence is HEEPEASHDTR. Composition is skewed to acidic residues over residues 767 to 791 and 892 to 919; these read EEFEASEVPETEPEAVSEPIEETTV and DYEEETEDYQTEAEVDEELEEEEEEEGE. Adenylate kinase regions lie at residues 992-1203 and 1412-1601; these read LRIC…ELIL and IRII…KNVQ. 1001-1006 is an ATP binding site; sequence GSGKTM. Residues 1021–1052 form an NMP 2 region; it reads QFEEVLQEKLLLKTEKKVGPEFEEDSENEQAA. Residues 1050–1052 and 1079–1082 contribute to the AMP site; these read QAA and VQLT. Positions 1124–1144 are LID 2; the sequence is DGFPRYPEEAQFLGDRGFFPD. 1421–1426 contributes to the ATP binding site; that stretch reads KSGKTT. Positions 1441 to 1472 are NMP 3; the sequence is SIGGALRYVLNNHPETELALMLNWHLHKGMTA. AMP contacts are provided by residues R1447, 1470–1472, 1499–1502, Q1506, and R1543; these read MTA and GYPV. The segment at 1536-1550 is LID 3; it reads LEKENEQRLPYPLHN.

This sequence belongs to the adenylate kinase family.

It is found in the cytoplasm. The protein localises to the nucleus. Its subcellular location is the cell projection. The protein resides in the cilium. It localises to the flagellum. The enzyme catalyses a ribonucleoside 5'-phosphate + ATP = a ribonucleoside 5'-diphosphate + ADP. The catalysed reaction is AMP + ATP = 2 ADP. It catalyses the reaction GTP + AMP = GDP + ADP. It carries out the reaction CMP + ATP = CDP + ADP. The enzyme catalyses GTP + CMP = CDP + GDP. The catalysed reaction is dAMP + ATP = dADP + ADP. It catalyses the reaction dCMP + ATP = dCDP + ADP. It carries out the reaction a ribonucleoside 5'-diphosphate + ATP = a ribonucleoside 5'-triphosphate + ADP. The enzyme catalyses CDP + ATP = CTP + ADP. The catalysed reaction is CDP + GTP = CTP + GDP. It catalyses the reaction GDP + ATP = GTP + ADP. It carries out the reaction UDP + ATP = UTP + ADP. The enzyme catalyses GTP + UDP = UTP + GDP. The catalysed reaction is dTDP + GTP = dTTP + GDP. It catalyses the reaction dCDP + ATP = dCTP + ADP. It carries out the reaction dCDP + GTP = dCTP + GDP. The enzyme catalyses dGDP + ATP = dGTP + ADP. The catalysed reaction is dTDP + ATP = dTTP + ADP. It catalyses the reaction dADP + GTP = dATP + GDP. In terms of biological role, broad-specificity nucleoside phosphate kinase involved in cellular nucleotide homeostasis by catalyzing nucleoside-phosphate interconversions. Similar to other adenylate kinases, preferentially catalyzes the phosphorylation of the nucleoside monophosphate AMP with ATP as phosphate donor to produce ADP. In vitro, can also catalyze the phosphorylation of CMP, dAMP and dCMP and use GTP as an alternate phosphate donor. Moreover, exhibits a diphosphate kinase activity, producing ATP, CTP, GTP, UTP, TTP, dATP, dCTP and dGTP from the corresponding diphosphate substrates with either ATP or GTP as phosphate donors. For this activity shows the following substrate preference CDP &gt; UDP &gt; ADP &gt; TDP. The polypeptide is Adenylate kinase 9 (Homo sapiens (Human)).